Consider the following 209-residue polypeptide: Hyperpolarization-activated voltage-gated potassium channel (209 aa).

The Cytoplasmic segment spans residues 1–10 (MNLKDRRLKK). The chain crosses the membrane as a helical span at residues 11-31 (IMEVLSLIFTFEIVASFILST). Residues 32–38 (YNPPYQD) are Extracellular-facing. The chain crosses the membrane as a helical span at residues 39–59 (LLIKLDYISIMFFTFEFIYNF). At 60–71 (YYVEDKAKFFKD) the chain is on the cytoplasmic side. Residues 72 to 92 (IYNIVDAIVVIAFLLYSLQVF) traverse the membrane as a helical segment. Residues 93–96 (YSKA) lie on the Extracellular side of the membrane. A helical; Voltage-sensor membrane pass occupies residues 97-117 (FLGLRVINLLRILVLLRIIKL). Residues 118–125 (RKLEENQA) lie on the Cytoplasmic side of the membrane. Residues 126-146 (LINFLTLLTICFIASCLIWIV) traverse the membrane as a helical segment. At 147–181 (ESGVNPAINNFFDAFYFTTISITTVGYGDITPKTD) the chain is on the extracellular side. A Selectivity filter motif is present at residues 170-175 (TVGYGD). A helical membrane pass occupies residues 182–202 (AGKLIIIFSVLFFISGLITSL). Residues 203–209 (QKALKGD) lie on the Cytoplasmic side of the membrane.

This sequence belongs to the potassium channel family. In terms of assembly, homotetramer.

It localises to the cell membrane. Its function is as follows. Voltage-gated potassium-selective channel opened by hyperpolarization. The protein is Hyperpolarization-activated voltage-gated potassium channel (mvp) of Methanocaldococcus jannaschii (strain ATCC 43067 / DSM 2661 / JAL-1 / JCM 10045 / NBRC 100440) (Methanococcus jannaschii).